The chain runs to 233 residues: Lipid A 4'-phosphatase (233 aa).

Residue Met1 is a topological domain, cytoplasmic. The chain crosses the membrane as a helical span at residues 2 to 22 (LLFWMWWALLAVFRAFPGIDI). The Extracellular portion of the chain corresponds to 23–60 (YFSQLFFVGADCDATAAAGNICGGFPYRDVAAFDLLRT). The chain crosses the membrane as a helical span at residues 61–81 (VFFRLPYVVAIVMVWKLVECY). Residues 82 to 94 (QQHGATFNAERAQ) lie on the Cytoplasmic side of the membrane. Residues 95–115 (KLKVALGTLLIGPVLLVNVVL) traverse the membrane as a helical segment. Residues 116-149 (KEHWGRPRPIQTDIFGGALHFAEAGSLAGKCVSN) are Extracellular-facing. The helical transmembrane segment at 150-170 (CSFVSGEAASAGWLFCLLLFV) threads the bilayer. The Cytoplasmic segment spans residues 171-176 (PKSLRY). Residues 177 to 197 (AVAAPLAAISILTPAMRLSFG) form a helical membrane-spanning segment. Topologically, residues 198–200 (AHY) are extracellular. The helical transmembrane segment at 201–221 (LSDVVLGWLSSLVVFAALLAL) threads the bilayer. At 222–233 (TESQQHQKNSEI) the chain is on the cytoplasmic side.

It belongs to the lipid A LpxF 4'-phosphatase family.

Its subcellular location is the cell inner membrane. Its pathway is bacterial outer membrane biogenesis; LPS lipid A biosynthesis. Removes the 4'-phosphate moiety from lipid IV(A) (a tetraacylated precursor of lipid A). The polypeptide is Lipid A 4'-phosphatase (Rhizobium leguminosarum).